Here is a 339-residue protein sequence, read N- to C-terminus: Heat-inducible transcription repressor HrcA (339 aa).

It belongs to the HrcA family.

Its function is as follows. Negative regulator of class I heat shock genes (grpE-dnaK-dnaJ and groELS operons). Prevents heat-shock induction of these operons. This Thiobacillus denitrificans (strain ATCC 25259 / T1) protein is Heat-inducible transcription repressor HrcA.